The sequence spans 218 residues: MNSVTVSHAPYTITYHDDWEPVMSQLVEFYNEVASWLLRDETSPIPDKFFIQLKQPLRNKRVCVCGIDPYPKDGTGVPFESPNFTKKSIKEIASSISRLTGVIDYKGYNLNIIDGVIPWNYYLSCKLGETKSHAIYWDKISKLLLQHITKHVSVLYCLGKTDYSNIRAKLESPVTTIVGYHPAARDRQFEKDRSFEIINVLLELDNKAPINWAQGFIY.

The active-site Proton acceptor is aspartate 68.

Belongs to the uracil-DNA glycosylase (UDG) superfamily. UNG family. As to quaternary structure, homodimer. Interacts with protein OPG148. Component of the Uracil-DNA glycosylase(UDG)-OPG148-polymerase complex; OPG148 and UDG form a heterodimeric processivity factor that associates with OPG71 to form the processive polymerase holoenzyme.

It catalyses the reaction Hydrolyzes single-stranded DNA or mismatched double-stranded DNA and polynucleotides, releasing free uracil.. Its function is as follows. Plays an essential role in viral replication as a component of the DNA polymerase processivity factor. Excises uracil residues from the DNA which can arise as a result of misincorporation of dUMP residues by DNA polymerase or due to deamination of cytosine. This Bos taurus (Bovine) protein is Uracil-DNA glycosylase (OPG116).